Here is a 484-residue protein sequence, read N- to C-terminus: Glycogen synthase (484 aa).

Lys-15 lines the ADP-alpha-D-glucose pocket.

The protein belongs to the glycosyltransferase 1 family. Bacterial/plant glycogen synthase subfamily.

The catalysed reaction is [(1-&gt;4)-alpha-D-glucosyl](n) + ADP-alpha-D-glucose = [(1-&gt;4)-alpha-D-glucosyl](n+1) + ADP + H(+). Its pathway is glycan biosynthesis; glycogen biosynthesis. In terms of biological role, synthesizes alpha-1,4-glucan chains using ADP-glucose. The chain is Glycogen synthase from Syntrophotalea carbinolica (strain DSM 2380 / NBRC 103641 / GraBd1) (Pelobacter carbinolicus).